We begin with the raw amino-acid sequence, 632 residues long: Chaperone protein DnaK (632 aa).

Position 198 is a phosphothreonine; by autocatalysis (Thr-198). The segment at 524 to 557 is disordered; that stretch reads RREAVDAKNHADSLVHSTEKALAEHGSKIEDSER.

It belongs to the heat shock protein 70 family.

Acts as a chaperone. This Nitrobacter hamburgensis (strain DSM 10229 / NCIMB 13809 / X14) protein is Chaperone protein DnaK.